The chain runs to 121 residues: Large ribosomal subunit protein uL18 (121 aa).

The protein belongs to the universal ribosomal protein uL18 family. As to quaternary structure, part of the 50S ribosomal subunit; part of the 5S rRNA/L5/L18/L25 subcomplex. Contacts the 5S and 23S rRNAs.

Functionally, this is one of the proteins that bind and probably mediate the attachment of the 5S RNA into the large ribosomal subunit, where it forms part of the central protuberance. This chain is Large ribosomal subunit protein uL18, found in Paraburkholderia xenovorans (strain LB400).